The following is a 160-amino-acid chain: Large ribosomal subunit protein eL21 (160 aa).

The protein belongs to the eukaryotic ribosomal protein eL21 family. As to quaternary structure, component of the large ribosomal subunit. Mature ribosomes consist of a small (40S) and a large (60S) subunit. The 40S subunit contains about 32 different proteins and 1 molecule of RNA (18S). The 60S subunit contains 45 different proteins and 3 molecules of RNA (25S, 5.8S and 5S).

The protein resides in the cytoplasm. Functionally, component of the ribosome, a large ribonucleoprotein complex responsible for the synthesis of proteins in the cell. The small ribosomal subunit (SSU) binds messenger RNAs (mRNAs) and translates the encoded message by selecting cognate aminoacyl-transfer RNA (tRNA) molecules. The large subunit (LSU) contains the ribosomal catalytic site termed the peptidyl transferase center (PTC), which catalyzes the formation of peptide bonds, thereby polymerizing the amino acids delivered by tRNAs into a polypeptide chain. The nascent polypeptides leave the ribosome through a tunnel in the LSU and interact with protein factors that function in enzymatic processing, targeting, and the membrane insertion of nascent chains at the exit of the ribosomal tunnel. This Candida albicans (strain SC5314 / ATCC MYA-2876) (Yeast) protein is Large ribosomal subunit protein eL21.